Here is a 314-residue protein sequence, read N- to C-terminus: Ornithine carbamoyltransferase (314 aa).

Carbamoyl phosphate is bound by residues 61-64, Gln88, Arg112, and 139-142; these read STRT and HPCQ. Residues Asn170, Asp234, and 238–239 contribute to the L-ornithine site; that span reads SM. Carbamoyl phosphate-binding positions include 274–275 and Arg302; that span reads CL.

It belongs to the aspartate/ornithine carbamoyltransferase superfamily. OTCase family.

It is found in the cytoplasm. It catalyses the reaction carbamoyl phosphate + L-ornithine = L-citrulline + phosphate + H(+). It participates in amino-acid biosynthesis; L-arginine biosynthesis; L-arginine from L-ornithine and carbamoyl phosphate: step 1/3. In terms of biological role, reversibly catalyzes the transfer of the carbamoyl group from carbamoyl phosphate (CP) to the N(epsilon) atom of ornithine (ORN) to produce L-citrulline. The protein is Ornithine carbamoyltransferase of Anoxybacillus flavithermus (strain DSM 21510 / WK1).